A 192-amino-acid polypeptide reads, in one-letter code: Pyridoxal 5'-phosphate synthase subunit PdxT (192 aa).

46 to 48 (GES) serves as a coordination point for L-glutamine. The active-site Nucleophile is cysteine 76. L-glutamine-binding positions include arginine 103 and 131 to 132 (IR). Catalysis depends on charge relay system residues histidine 167 and glutamate 169.

It belongs to the glutaminase PdxT/SNO family. In terms of assembly, in the presence of PdxS, forms a dodecamer of heterodimers. Only shows activity in the heterodimer.

It carries out the reaction aldehydo-D-ribose 5-phosphate + D-glyceraldehyde 3-phosphate + L-glutamine = pyridoxal 5'-phosphate + L-glutamate + phosphate + 3 H2O + H(+). The catalysed reaction is L-glutamine + H2O = L-glutamate + NH4(+). Its pathway is cofactor biosynthesis; pyridoxal 5'-phosphate biosynthesis. In terms of biological role, catalyzes the hydrolysis of glutamine to glutamate and ammonia as part of the biosynthesis of pyridoxal 5'-phosphate. The resulting ammonia molecule is channeled to the active site of PdxS. This Koribacter versatilis (strain Ellin345) protein is Pyridoxal 5'-phosphate synthase subunit PdxT.